A 99-amino-acid chain; its full sequence is Integration host factor subunit alpha (99 aa).

Residues 49 to 75 are disordered; it reads FGNFDLRDKNQRPGRNPKTGEDIPITA.

Belongs to the bacterial histone-like protein family. In terms of assembly, heterodimer of an alpha and a beta chain.

Its function is as follows. This protein is one of the two subunits of integration host factor, a specific DNA-binding protein that functions in genetic recombination as well as in transcriptional and translational control. In Salmonella agona (strain SL483), this protein is Integration host factor subunit alpha.